The sequence spans 371 residues: 4-hydroxy-3-methylbut-2-en-1-yl diphosphate synthase (flavodoxin) (371 aa).

[4Fe-4S] cluster contacts are provided by cysteine 268, cysteine 271, cysteine 303, and glutamate 310.

It belongs to the IspG family. [4Fe-4S] cluster serves as cofactor.

It catalyses the reaction (2E)-4-hydroxy-3-methylbut-2-enyl diphosphate + oxidized [flavodoxin] + H2O + 2 H(+) = 2-C-methyl-D-erythritol 2,4-cyclic diphosphate + reduced [flavodoxin]. It participates in isoprenoid biosynthesis; isopentenyl diphosphate biosynthesis via DXP pathway; isopentenyl diphosphate from 1-deoxy-D-xylulose 5-phosphate: step 5/6. Its function is as follows. Converts 2C-methyl-D-erythritol 2,4-cyclodiphosphate (ME-2,4cPP) into 1-hydroxy-2-methyl-2-(E)-butenyl 4-diphosphate. This Lysinibacillus sphaericus (strain C3-41) protein is 4-hydroxy-3-methylbut-2-en-1-yl diphosphate synthase (flavodoxin).